A 457-amino-acid polypeptide reads, in one-letter code: Chromosomal replication initiator protein DnaA (457 aa).

Residues 1-81 are domain I, interacts with DnaA modulators; it reads MERDLSQLWQ…NNTDLVIKVQ (81 aa). The segment at 81–119 is domain II; sequence QEGSKPAARKVVAQQEIANTPVQHSAPMPENEPQAAFRS. A domain III, AAA+ region region spans residues 120-337; sequence NLNQHHLFEN…GALNRVHANA (218 aa). ATP contacts are provided by Gly165, Gly167, Lys168, and Thr169. Positions 338-457 are domain IV, binds dsDNA; that stretch reads DFTGKAITID…WSNLIRTLSA (120 aa).

It belongs to the DnaA family. In terms of assembly, oligomerizes as a right-handed, spiral filament on DNA at oriC.

The protein resides in the cytoplasm. Functionally, plays an essential role in the initiation and regulation of chromosomal replication. ATP-DnaA binds to the origin of replication (oriC) to initiate formation of the DNA replication initiation complex once per cell cycle. Binds the DnaA box (a 9 base pair repeat at the origin) and separates the double-stranded (ds)DNA. Forms a right-handed helical filament on oriC DNA; dsDNA binds to the exterior of the filament while single-stranded (ss)DNA is stabiized in the filament's interior. The ATP-DnaA-oriC complex binds and stabilizes one strand of the AT-rich DNA unwinding element (DUE), permitting loading of DNA polymerase. After initiation quickly degrades to an ADP-DnaA complex that is not apt for DNA replication. Binds acidic phospholipids. This chain is Chromosomal replication initiator protein DnaA, found in Mannheimia succiniciproducens (strain KCTC 0769BP / MBEL55E).